We begin with the raw amino-acid sequence, 332 residues long: Ferredoxin--NADP reductase (332 aa).

FAD is bound by residues D33, Q41, Y46, A86, I121, D282, and S325.

It belongs to the ferredoxin--NADP reductase type 2 family. In terms of assembly, homodimer. It depends on FAD as a cofactor.

It catalyses the reaction 2 reduced [2Fe-2S]-[ferredoxin] + NADP(+) + H(+) = 2 oxidized [2Fe-2S]-[ferredoxin] + NADPH. This chain is Ferredoxin--NADP reductase, found in Metallosphaera sedula (strain ATCC 51363 / DSM 5348 / JCM 9185 / NBRC 15509 / TH2).